Here is a 410-residue protein sequence, read N- to C-terminus: Serine/threonine transporter SstT (410 aa).

10 consecutive transmembrane segments (helical) span residues 15–35 (GSLV…AWLS), 49–69 (FVNA…ISSI), 82–102 (PIVM…VVAS), 118–138 (IVPP…MVTN), 142–162 (AVMK…GFAF), 190–210 (FAPV…GFDA), 217–237 (LLGL…PLLV), 299–319 (MAGA…TLGI), 331–351 (LVAS…LLLI), and 358–378 (FGIP…IGVL).

The protein belongs to the dicarboxylate/amino acid:cation symporter (DAACS) (TC 2.A.23) family.

The protein localises to the cell inner membrane. The catalysed reaction is L-serine(in) + Na(+)(in) = L-serine(out) + Na(+)(out). The enzyme catalyses L-threonine(in) + Na(+)(in) = L-threonine(out) + Na(+)(out). In terms of biological role, involved in the import of serine and threonine into the cell, with the concomitant import of sodium (symport system). This Erwinia tasmaniensis (strain DSM 17950 / CFBP 7177 / CIP 109463 / NCPPB 4357 / Et1/99) protein is Serine/threonine transporter SstT.